A 128-amino-acid chain; its full sequence is Iron-sulfur cluster insertion protein ErpA (128 aa).

Residues C56, C120, and C122 each contribute to the iron-sulfur cluster site.

The protein belongs to the HesB/IscA family. Homodimer. Requires iron-sulfur cluster as cofactor.

Functionally, required for insertion of 4Fe-4S clusters for at least IspG. This chain is Iron-sulfur cluster insertion protein ErpA, found in Xanthomonas axonopodis pv. citri (strain 306).